The sequence spans 337 residues: Phosphate acyltransferase (337 aa).

It belongs to the PlsX family. In terms of assembly, homodimer. Probably interacts with PlsY.

The protein resides in the cytoplasm. The catalysed reaction is a fatty acyl-[ACP] + phosphate = an acyl phosphate + holo-[ACP]. The protein operates within lipid metabolism; phospholipid metabolism. Functionally, catalyzes the reversible formation of acyl-phosphate (acyl-PO(4)) from acyl-[acyl-carrier-protein] (acyl-ACP). This enzyme utilizes acyl-ACP as fatty acyl donor, but not acyl-CoA. In Listeria welshimeri serovar 6b (strain ATCC 35897 / DSM 20650 / CCUG 15529 / CIP 8149 / NCTC 11857 / SLCC 5334 / V8), this protein is Phosphate acyltransferase.